Here is a 365-residue protein sequence, read N- to C-terminus: Putative F-box protein At1g31000 (365 aa).

Positions 15 to 62 (NDSDSVRIDIVIEIVKRLPLKDVSRFLLVSKLWSEIIRSPYFIRSFPF) constitute an F-box domain.

The sequence is that of Putative F-box protein At1g31000 from Arabidopsis thaliana (Mouse-ear cress).